Consider the following 248-residue polypeptide: Small ribosomal subunit protein uS3 (248 aa).

A KH type-2 domain is found at 39 to 108 (IRKLVDKKLS…TVAVNVAEIP (70 aa)). Residues 214–248 (ETIARPQRRNDERRPEGGDRANRRRPTARRRAGGE) form a disordered region. The span at 221 to 234 (RRNDERRPEGGDRA) shows a compositional bias: basic and acidic residues. Basic residues predominate over residues 235–248 (NRRRPTARRRAGGE).

The protein belongs to the universal ribosomal protein uS3 family. Part of the 30S ribosomal subunit. Forms a tight complex with proteins S10 and S14.

Its function is as follows. Binds the lower part of the 30S subunit head. Binds mRNA in the 70S ribosome, positioning it for translation. This is Small ribosomal subunit protein uS3 from Deinococcus deserti (strain DSM 17065 / CIP 109153 / LMG 22923 / VCD115).